The sequence spans 388 residues: AdoMet-dependent heme synthase (388 aa).

The segment covering 1–12 has biased composition (low complexity); the sequence is MHNANHPHGNGH. The interval 1-29 is disordered; it reads MHNANHPHGNGHPAEKKGMGAHSGAMNMP. Positions 34 to 257 constitute a Radical SAM core domain; the sequence is DGSPACRLIA…TSMHLKATCA (224 aa). 3 residues coordinate [4Fe-4S] cluster: Cys-50, Cys-54, and Cys-57.

This sequence belongs to the radical SAM superfamily. The cofactor is [4Fe-4S] cluster.

The catalysed reaction is Fe-coproporphyrin III + 2 S-adenosyl-L-methionine = heme b + 2 5'-deoxyadenosine + 2 L-methionine + 2 CO2. Its pathway is porphyrin-containing compound metabolism; protoheme biosynthesis. In terms of biological role, involved in siroheme-dependent heme b biosynthesis. Catalyzes the conversion of Fe-coproporphyrin III into heme by the oxidative decarboxylation of two propionate side chains. This Oleidesulfovibrio alaskensis (strain ATCC BAA-1058 / DSM 17464 / G20) (Desulfovibrio alaskensis) protein is AdoMet-dependent heme synthase.